We begin with the raw amino-acid sequence, 355 residues long: MPSLGQRETQVLATIIESYIASASPVGSRAVAEHSGLHLSPASMRATMSDLTDLGYLEQPHTSAGRVPTARAFRLYVDSLLRPLPLGSAERDAIADELSRQELEISGILRRAANLLSGHARQLGMVVAPSEDEARWRSIEFAPAAEGLVLAVLMLEGGLVRTRTVRVDERYGQDELVRFGNYLNEHFRGLSLSEARDRIGHELARAGSRLEEMCVRALALSRRAVEHMGDDRELIVNGTLNMLDHAEFTDVGRMRDLLAAIEERSRLLELLDRTLSERDVRITFCQDVADGAPDGLRGCSVISAAYGGDTPRGVVSVVGPLRMDYAKIVPVVQCVSRALTQLFRERFAAAPCRLP.

The protein belongs to the HrcA family.

Functionally, negative regulator of class I heat shock genes (grpE-dnaK-dnaJ and groELS operons). Prevents heat-shock induction of these operons. The chain is Heat-inducible transcription repressor HrcA from Nitratidesulfovibrio vulgaris (strain DSM 19637 / Miyazaki F) (Desulfovibrio vulgaris).